A 337-amino-acid polypeptide reads, in one-letter code: DNA-directed RNA polymerase subunit alpha (337 aa).

Residues 1 to 233 form an alpha N-terminal domain (alpha-NTD) region; sequence MVREKVTVST…DLFIPFLHME (233 aa). Positions 265–337 are alpha C-terminal domain (alpha-CTD); that stretch reads KKIALKSIFI…FVIDLAKNKF (73 aa).

The protein belongs to the RNA polymerase alpha chain family. In plastids the minimal PEP RNA polymerase catalytic core is composed of four subunits: alpha, beta, beta', and beta''. When a (nuclear-encoded) sigma factor is associated with the core the holoenzyme is formed, which can initiate transcription.

The protein localises to the plastid. Its subcellular location is the chloroplast. The enzyme catalyses RNA(n) + a ribonucleoside 5'-triphosphate = RNA(n+1) + diphosphate. In terms of biological role, DNA-dependent RNA polymerase catalyzes the transcription of DNA into RNA using the four ribonucleoside triphosphates as substrates. The chain is DNA-directed RNA polymerase subunit alpha from Solanum lycopersicum (Tomato).